A 172-amino-acid chain; its full sequence is Adenine phosphoribosyltransferase (172 aa).

This sequence belongs to the purine/pyrimidine phosphoribosyltransferase family. Homodimer.

The protein localises to the cytoplasm. It catalyses the reaction AMP + diphosphate = 5-phospho-alpha-D-ribose 1-diphosphate + adenine. It participates in purine metabolism; AMP biosynthesis via salvage pathway; AMP from adenine: step 1/1. In terms of biological role, catalyzes a salvage reaction resulting in the formation of AMP, that is energically less costly than de novo synthesis. This chain is Adenine phosphoribosyltransferase, found in Microcystis aeruginosa (strain NIES-843 / IAM M-2473).